A 354-amino-acid polypeptide reads, in one-letter code: Probable trehalose-phosphate phosphatase E (354 aa).

Belongs to the trehalose phosphatase family. The cofactor is a divalent metal cation.

It catalyses the reaction alpha,alpha-trehalose 6-phosphate + H2O = alpha,alpha-trehalose + phosphate. Its pathway is glycan biosynthesis; trehalose biosynthesis. In terms of biological role, removes the phosphate from trehalose 6-phosphate to produce free trehalose. Trehalose accumulation in plant may improve abiotic stress tolerance. The sequence is that of Probable trehalose-phosphate phosphatase E (TPPE) from Arabidopsis thaliana (Mouse-ear cress).